The primary structure comprises 198 residues: Fimbriae W protein (198 aa).

In terms of domain architecture, HTH luxR-type spans H127–L192.

It localises to the fimbrium. This Salmonella typhimurium (strain LT2 / SGSC1412 / ATCC 700720) protein is Fimbriae W protein (fimW).